A 223-amino-acid chain; its full sequence is Ribose-5-phosphate isomerase A (223 aa).

Residues 29–32 (TGST), 82–85 (DGAD), and 95–98 (KGGG) each bind substrate. E104 functions as the Proton acceptor in the catalytic mechanism. K122 provides a ligand contact to substrate.

This sequence belongs to the ribose 5-phosphate isomerase family. Homodimer.

It carries out the reaction aldehydo-D-ribose 5-phosphate = D-ribulose 5-phosphate. It participates in carbohydrate degradation; pentose phosphate pathway; D-ribose 5-phosphate from D-ribulose 5-phosphate (non-oxidative stage): step 1/1. In terms of biological role, catalyzes the reversible conversion of ribose-5-phosphate to ribulose 5-phosphate. In Neisseria meningitidis serogroup C / serotype 2a (strain ATCC 700532 / DSM 15464 / FAM18), this protein is Ribose-5-phosphate isomerase A.